We begin with the raw amino-acid sequence, 106 residues long: Ribosomal processing cysteine protease Prp (106 aa).

Residue histidine 22 is the Proton donor of the active site. The Nucleophile role is filled by cysteine 34.

The protein belongs to the Prp family. As to quaternary structure, homodimer. A mutant protein unable to cleave bL27 copurifies with its substrate.

With respect to regulation, not inhibited by short peptide analogs; a 6-mer inhibits only 20% while a 13-mer inhibits 63%. Inhibited by Ac-KLNLQFF-CH(2) which binds covalantly to Cys-34. Inhibited by mersalyl acid (C13H18HgNO6). Functionally, an essential cysteine protease that cleaves the N-terminal 9 amino acids from ribosomal protein bL27. Also acts as an N-terminal protease on the major capsid and scaffold assembly proteins of bacteriophage 80alpha. Cleavage of the N-terminus of bL27 (and thus this enzyme) is essential for growth; it cannot be replaced by a 'pre-cleaved' or non-cleavable form of bL27. Might serve a chaperone function during ribosome assembly. The chain is Ribosomal processing cysteine protease Prp from Staphylococcus aureus (strain NCTC 8325 / PS 47).